A 210-amino-acid chain; its full sequence is Ras-related protein RABC2a (210 aa).

20–27 contacts GTP; that stretch reads GDSGVGKS. An Effector region motif is present at residues 41-49; that stretch reads LAPTIGVDF. GTP is bound by residues 67–71, 127–130, and 157–158; these read DTAGQ, NKVD, and SA. S-geranylgeranyl cysteine attachment occurs at residues Cys208 and Cys209.

This sequence belongs to the small GTPase superfamily. Rab family. Interacts with XI-2/MYA2.

The protein localises to the cell membrane. It localises to the cytoplasm. In terms of biological role, intracellular vesicle trafficking and protein transport. The protein is Ras-related protein RABC2a (RABC2A) of Arabidopsis thaliana (Mouse-ear cress).